The following is a 240-amino-acid chain: Uridylate kinase (240 aa).

Residue 13-16 (KLSG) participates in ATP binding. The interval 21–26 (GDKGFG) is involved in allosteric activation by GTP. Gly55 serves as a coordination point for UMP. Gly56 and Arg60 together coordinate ATP. Residues Asp75 and 136 to 143 (IGNPYFST) each bind UMP. ATP-binding residues include Asn164, Tyr170, and Asp173.

This sequence belongs to the UMP kinase family. In terms of assembly, homohexamer.

It is found in the cytoplasm. The enzyme catalyses UMP + ATP = UDP + ADP. It functions in the pathway pyrimidine metabolism; CTP biosynthesis via de novo pathway; UDP from UMP (UMPK route): step 1/1. Its activity is regulated as follows. Allosterically activated by GTP. Inhibited by UTP. Catalyzes the reversible phosphorylation of UMP to UDP. In Staphylococcus haemolyticus (strain JCSC1435), this protein is Uridylate kinase.